A 559-amino-acid chain; its full sequence is Urocanate hydratase (559 aa).

Residues 53–54 (GG), glutamine 131, 177–179 (GMG), glutamate 197, arginine 202, 243–244 (NA), 264–268 (QTSAH), 274–275 (YL), and tyrosine 323 each bind NAD(+). The active site involves cysteine 411. Glycine 493 contributes to the NAD(+) binding site.

It belongs to the urocanase family. The cofactor is NAD(+).

It localises to the cytoplasm. The enzyme catalyses 4-imidazolone-5-propanoate = trans-urocanate + H2O. It functions in the pathway amino-acid degradation; L-histidine degradation into L-glutamate; N-formimidoyl-L-glutamate from L-histidine: step 2/3. Its function is as follows. Catalyzes the conversion of urocanate to 4-imidazolone-5-propionate. The protein is Urocanate hydratase of Pseudomonas aeruginosa (strain LESB58).